A 101-amino-acid chain; its full sequence is Putative pterin-4-alpha-carbinolamine dehydratase (101 aa).

The protein belongs to the pterin-4-alpha-carbinolamine dehydratase family.

The enzyme catalyses (4aS,6R)-4a-hydroxy-L-erythro-5,6,7,8-tetrahydrobiopterin = (6R)-L-erythro-6,7-dihydrobiopterin + H2O. This Rhizobium leguminosarum bv. trifolii (strain WSM2304) protein is Putative pterin-4-alpha-carbinolamine dehydratase.